A 542-amino-acid polypeptide reads, in one-letter code: Protein OS-9 homolog (542 aa).

The signal sequence occupies residues 1 to 21 (MQAKIIYALSAISALIPLGSS). N-linked (GlcNAc...) asparagine glycans are attached at residues Asn-52 and Asn-74. 4 disulfide bridges follow: Cys-70/Cys-258, Cys-117/Cys-130, Cys-193/Cys-227, and Cys-208/Cys-239. Residues 115-241 (ERCIFYQAGF…QVTIPELCNL (127 aa)) form the MRH domain. A mannooligosaccharide derivative is bound by residues Trp-125, Gln-137, Asp-194, Arg-200, Glu-223, and Tyr-229. Asn-380 carries N-linked (GlcNAc...) asparagine glycosylation. The segment at 497–528 (NARMDDDESTSHTTRDIGEAGSQTTGNTESEV) is disordered. Residues 505 to 514 (STSHTTRDIG) show a composition bias toward basic and acidic residues. Over residues 517–528 (GSQTTGNTESEV) the composition is skewed to polar residues. Residues 539-542 (HDEL) carry the Prevents secretion from ER motif.

This sequence belongs to the OS-9 family. In terms of assembly, homodimer. Component of the HRD1 ubiquitin ligase complex which contains the E3 ligase HRD1, its cofactors HRD3, USA1 and DER1, substrate recruiting factor YOS9 and CDC48-binding protein UBX2. Within the complex, interacts (via N-terminus) with HRD3. In ERAD-L, HRD3 and YOS9 jointly bind misfolded glycoproteins in the endoplasmic reticulum (ER) lumen. Movement of ERAD-L substrates through the ER membrane is facilitated by HRD1 and DER1 which have lateral gates facing each other and which distort the membrane region between the lateral gates, making it much thinner than a normal phospholipid bilayer. Substrates insert into the membrane as a hairpin loop with one strand interacting with DER1 and the other with HRD1. The HRD1 complex interacts with the heterotrimeric CDC48-NPL4-UFD1 ATPase complex which is recruited by UBX2 via its interaction with CDC48 and which moves ubiquitinated substrates to the cytosol for targeting to the proteasome. Interacts with KAR2 and EMP47. Interacts with misfolded ER lumenal proteins like PCR1. Interacts with the GPI-anchored proteins GAS1 and MKC7.

It is found in the endoplasmic reticulum membrane. In terms of biological role, lectin involved in the quality control of the secretory pathway. As a member of the endoplasmic reticulum-associated degradation lumenal (ERAD-L) surveillance system, targets misfolded endoplasmic reticulum lumenal glycoproteins for degradation. The recognition of targets is N-glycan specific. Functions in recruiting misfolded protein substrates in conjunction with HRD3. This Saccharomyces cerevisiae (strain ATCC 204508 / S288c) (Baker's yeast) protein is Protein OS-9 homolog (YOS9).